The following is a 177-amino-acid chain: Protein GrpE (177 aa).

The segment at 1-26 is disordered; that stretch reads MSEEIKKDDLQEEVEATETEETVEEV. Acidic residues predominate over residues 10–26; the sequence is LQEEVEATETEETVEEV.

Belongs to the GrpE family. As to quaternary structure, homodimer.

It is found in the cytoplasm. Functionally, participates actively in the response to hyperosmotic and heat shock by preventing the aggregation of stress-denatured proteins, in association with DnaK and GrpE. It is the nucleotide exchange factor for DnaK and may function as a thermosensor. Unfolded proteins bind initially to DnaJ; upon interaction with the DnaJ-bound protein, DnaK hydrolyzes its bound ATP, resulting in the formation of a stable complex. GrpE releases ADP from DnaK; ATP binding to DnaK triggers the release of the substrate protein, thus completing the reaction cycle. Several rounds of ATP-dependent interactions between DnaJ, DnaK and GrpE are required for fully efficient folding. This chain is Protein GrpE, found in Streptococcus agalactiae serotype Ia (strain ATCC 27591 / A909 / CDC SS700).